Consider the following 263-residue polypeptide: Small ribosomal subunit protein uS2m (263 aa).

The transit peptide at 1-15 (MLSRKLSPEQLVARR) directs the protein to the mitochondrion.

It belongs to the universal ribosomal protein uS2 family. Component of the mitochondrial small ribosomal subunit (mt-SSU). Mature yeast 74S mitochondrial ribosomes consist of a small (37S) and a large (54S) subunit. The 37S small subunit contains a 15S ribosomal RNA (15S mt-rRNA) and at least 32 different proteins. The 54S large subunit contains a 21S rRNA (21S mt-rRNA) and at least 45 different proteins.

Its subcellular location is the mitochondrion. In terms of biological role, component of the mitochondrial ribosome (mitoribosome), a dedicated translation machinery responsible for the synthesis of mitochondrial genome-encoded proteins, including at least some of the essential transmembrane subunits of the mitochondrial respiratory chain. The mitoribosomes are attached to the mitochondrial inner membrane and translation products are cotranslationally integrated into the membrane. This Schizosaccharomyces pombe (strain 972 / ATCC 24843) (Fission yeast) protein is Small ribosomal subunit protein uS2m.